Reading from the N-terminus, the 5068-residue chain is Protein piccolo (5068 aa).

Residues 1–20 are compositionally biased toward low complexity; sequence MGNEASLEGEGLPEGLAAAA. Disordered stretches follow at residues 1 to 143 and 173 to 524; these read MGNE…DFKE and FDLI…QAPA. Pro residues predominate over residues 93 to 102; that stretch reads PGKPPDPGRP. 3 stretches are compositionally biased toward basic and acidic residues: residues 111–122, 133–143, and 185–199; these read RTTDTFRSEQKL, KESKSRTDFKE, and ETTK…DQGK. Position 212 is a phosphoserine (Ser-212). A compositionally biased stretch (polar residues) spans 232 to 241; the sequence is PSKSVSSQQA. Residues 252–279 are compositionally biased toward low complexity; the sequence is AKPSQQSPAQTPAQQAKPVAQQPGPAKA. Residues 319 to 334 are compositionally biased toward polar residues; sequence TSLQQPGPKSLAQTPG. Composition is skewed to pro residues over residues 391-407 and 416-487; these read PTKP…PQPQ and PQQP…PQPQ. Residues 401 to 500 form a 10 X 10 AA tandem approximate repeats of P-A-K-P-Q-P-Q-Q-P-X region; that stretch reads PAKPQPQQPV…LGKPSAQQPS (100 aa). The span at 495–508 shows a compositional bias: polar residues; sequence SAQQPSKSISQTVT. Over residues 515–524 the composition is skewed to low complexity; that stretch reads PPTSAAQAPA. Residues 532–556 form a C4-type zinc finger; that stretch reads CPLCNTTELLLHTPEKANFNTCTEC. 4 disordered regions span residues 594-867, 883-1005, 1057-1345, and 1364-1803; these read AAIP…TVTG, LIST…TELN, LGDM…PSDL, and VGEK…SDPE. The segment covering 610-625 has biased composition (polar residues); the sequence is QPATASKSPVPSQQAS. A compositionally biased stretch (basic and acidic residues) spans 626 to 644; sequence PKKELPSKQDSPKAPESKK. Over residues 709 to 738 the composition is skewed to low complexity; sequence SPSSAAATSKPAILSSQVQAQAQVTTAPPL. Over residues 782–795 the composition is skewed to basic and acidic residues; that stretch reads ESKDPVQKKEEPKK. Positions 809–830 are enriched in low complexity; it reads VPKGSPTPSGTRPTTGQATPQS. 2 positions are modified to phosphoserine: Ser-844 and Ser-856. Composition is skewed to polar residues over residues 856–865 and 883–893; these read SQPTTPQETV and LISTAGQQAPH. Position 860 is a phosphothreonine (Thr-860). A C4-type zinc finger spans residues 997–1020; sequence CPLCRTELNVGSQDPPNFNTCTEC. Residues 1073–1085 show a composition bias toward pro residues; the sequence is SPVPAPAEPPPQK. The segment covering 1097–1116 has biased composition (basic and acidic residues); the sequence is KETEVKAETEKQIPEKETPS. Residue Thr-1120 is modified to Phosphothreonine. 4 stretches are compositionally biased toward basic and acidic residues: residues 1144 to 1165, 1172 to 1186, 1244 to 1253, and 1262 to 1283; these read PEKK…KKPP, LEEK…KLPP, PKDRQKESRD, and TAKE…DKSD. The span at 1290–1306 shows a compositional bias: polar residues; sequence PKSPQGLSDTGYSSDGI. A phosphoserine mark is found at Ser-1292, Ser-1302, Ser-1303, Ser-1332, Ser-1334, Ser-1337, Ser-1338, and Ser-1341. Positions 1319 to 1333 are enriched in basic and acidic residues; that stretch reads SDEKDLLKGLKKDSF. Over residues 1334–1343 the composition is skewed to low complexity; that stretch reads SQESSPSSPS. Over residues 1374–1392 the composition is skewed to polar residues; sequence PQKVSPEQPQDQQKTQTPS. Residues 1405-1444 are compositionally biased toward basic and acidic residues; it reads KESQEKKVTSKKDSAQGFPSRKEHKENPELVDDLSPRRAS. 9 positions are modified to phosphoserine: Ser-1439, Ser-1451, Ser-1452, Ser-1454, Ser-1457, Ser-1481, Ser-1484, Ser-1505, and Ser-1507. A compositionally biased stretch (acidic residues) spans 1499-1511; the sequence is SADEDASGSEDEE. The residue at position 1552 (Thr-1552) is a Phosphothreonine. 3 positions are modified to phosphoserine: Ser-1553, Ser-1563, and Ser-1575. Residues 1566–1575 show a composition bias toward acidic residues; sequence DEDDETFDES. A compositionally biased stretch (basic and acidic residues) spans 1576–1587; that stretch reads PELKFRETKSQE. The segment covering 1606–1624 has biased composition (polar residues); that stretch reads ELNSTVTDKYSAESSQKKT. The segment covering 1628 to 1638 has biased composition (acidic residues); sequence FDEEPELEMES. Ser-1638 is subject to Phosphoserine. A Phosphothreonine modification is found at Thr-1640. A phosphoserine mark is found at Ser-1642 and Ser-1647. A compositionally biased stretch (polar residues) spans 1650 to 1667; the sequence is EGSSSLHASSFTPGTSPT. Residues 1707–1720 show a composition bias toward acidic residues; sequence DSSEEEELREEEEL. Phosphoserine occurs at positions 1708 and 1709. A compositionally biased stretch (basic and acidic residues) spans 1721 to 1734; the sequence is LKEQEKQRELEQQQ. Thr-1760 is modified (phosphothreonine). Position 1766 is a phosphoserine (Ser-1766). The span at 1775-1790 shows a compositional bias: basic and acidic residues; that stretch reads EELRQAAEMEELHRSS. Phosphoserine is present on residues Ser-1795, Ser-1800, Ser-1808, and Ser-1829. 2 disordered regions span residues 2104 to 2126 and 2261 to 2377; these read PSES…ISSV and EAEL…AAAA. Positions 2109 to 2126 are enriched in low complexity; sequence TSVPPSDTPSLTSSISSV. Residues 2277–2291 are compositionally biased toward polar residues; the sequence is TPSSQTKEQPGSPHS. Positions 2334–2368 are enriched in pro residues; that stretch reads QPPPPPPPPPPPPPPPPPPPPPPLPPATSPKPPTY. A Phosphoserine modification is found at Ser-2495. An O-linked (GlcNAc) threonine glycan is attached at Thr-2686. An O-linked (GlcNAc) serine glycan is attached at Ser-2960. At Thr-2998 the chain carries Phosphothreonine. 2 disordered regions span residues 3334–3443 and 3490–3556; these read KEEK…SKVS and KGGS…LYSP. Ser-3358 is subject to Phosphoserine. Residues 3361 to 3370 show a composition bias toward basic and acidic residues; sequence DDPRNLKKIV. A Phosphoserine modification is found at Ser-3372. Phosphothreonine is present on residues Thr-3376 and Thr-3403. Residues 3403–3412 show a composition bias toward acidic residues; the sequence is TDDEDQDEWD. Over residues 3495-3507 the composition is skewed to polar residues; the sequence is GCQTETDPDTQSP. A phosphoserine mark is found at Ser-3506, Ser-3514, Ser-3545, Ser-3549, Ser-3555, Ser-3558, Ser-3561, Ser-3582, Ser-3608, Ser-3610, and Ser-3616. Disordered stretches follow at residues 3576-3679 and 3760-3797; these read PLPD…RRRM and DYMS…QFIP. Composition is skewed to polar residues over residues 3636 to 3645 and 3661 to 3673; these read KGSQTTSGTQ and STGT…TMGT. Residue Ser-3763 is modified to Phosphoserine. Residues 3773 to 3785 show a composition bias toward basic and acidic residues; it reads SRVESQHGIERPR. Residues 3787-3797 show a composition bias toward polar residues; that stretch reads APQTEFSQFIP. A phosphoserine mark is found at Ser-4016, Ser-4042, and Ser-4132. 2 disordered regions span residues 4207–4231 and 4254–4273; these read ADKP…GLDL and VSFG…LPIS. The span at 4210 to 4231 shows a compositional bias: low complexity; sequence PYSSGSRSRPSSRPSSVYGLDL. Over residues 4257-4273 the composition is skewed to polar residues; the sequence is GHSSSSARTKPTSLPIS. A phosphoserine mark is found at Ser-4286, Ser-4290, Ser-4293, Ser-4322, and Ser-4358. The interval 4317 to 4339 is disordered; it reads RDQFGSSHSLPEVQQHMREESRT. The PDZ domain maps to 4424 to 4518; the sequence is RIKITRDSKD…EAEICVRLDL (95 aa). The disordered stretch occupies residues 4574–4620; it reads KGAHAHSGPTSAGSSSVPSPGQPGSPSVSKKKHGGSKPTDVSKTASH. Residues 4578–4601 show a composition bias toward low complexity; the sequence is AHSGPTSAGSSSVPSPGQPGSPSV. At Ser-4592 the chain carries Phosphoserine. One can recognise a C2 1 domain in the interval 4622–4751; the sequence is ITGEIQLQIN…SHLDNTPRWY (130 aa). Ca(2+)-binding residues include Asp-4651 and Asp-4657. Residue Ser-4706 is modified to Phosphoserine. The Ca(2+) site is built by Asp-4721, Asp-4723, Ser-4726, and Asp-4729. 2 disordered regions span residues 4758-4834 and 4857-4891; these read ESIE…SVAQ and QPTK…SEGS. 2 stretches are compositionally biased toward low complexity: residues 4766 to 4778 and 4805 to 4815; these read HSSQ…PKPS and SSPGSSKSSSE. Positions 4823 to 4834 are enriched in polar residues; that stretch reads PSRSQSKTSVAQ. Positions 4870–4891 are enriched in low complexity; it reads SVSTGSSGSSVGSGYSVDSEGS. The C2 2 domain maps to 4933-5058; it reads VMGEIKLALK…DLRKRIVNWH (126 aa).

Interacts with BSN, ERC2/CAST1, RIMS1 and UNC13A. Interacts (via C-terminus) with TRIO (via N-terminus). Interacts with CTBP1. Interacts with SIAH1; this interaction negatively regulates SIAH1 E3 ligase activity. Directly interacts with GIT1 and GIT2. Ca(2+) is required as a cofactor. As to expression, highly expressed in brain. Moderately expressed in pituitary gland and pancreatic islets. Low levels found in stomach.

It is found in the presynaptic active zone. Scaffold protein of the presynaptic cytomatrix at the active zone (CAZ) which is the place in the synapse where neurotransmitter is released. After synthesis, participates in the formation of Golgi-derived membranous organelles termed Piccolo-Bassoon transport vesicles (PTVs) that are transported along axons to sites of nascent synaptic contacts. At the presynaptic active zone, regulates the spatial organization of synaptic vesicle cluster, the protein complexes that execute membrane fusion and compensatory endocytosis. Organizes as well the readily releasable pool of synaptic vesicles and safeguards a fraction of them to be not immediately available for action potential-induced release. Also functions in processes other than assembly such as the regulation of specific presynaptic protein ubiquitination by interacting with SIAH1 or the regulation of presynaptic autophagy. Also mediates synapse to nucleus communication leading to reconfiguration of gene expression by associating with the transcriptional corepressor CTBP1 and by subsequently reducing the size of its pool available for nuclear import. The chain is Protein piccolo from Mus musculus (Mouse).